The sequence spans 281 residues: MEEMSLLNHSGGPVTRSRIKHDLADLGLKDGDVVIFHTRMSAIGYVAGGTQTIIGALLDVVGARGTLMVPCGWNNAPPYDFLDWPRDWQDALRAEHPAYDPDLSEADYNNGRLPEALPRWPGAIRSRHPDASFAALGPAAAELMAEHPWDHPHGPDTPLARLIAHSGRVLLLGAPLDTMTLLHHAEALADVRSKRFVTYEQPILVNGQRVWRQFRDIDSEEGAFDYSTVRRGVEPFEAIARDMLSAGIGRQGRVGAADSYLFDAGPVFNFAINWIEAKLKR.

The protein belongs to the antibiotic N-acetyltransferase family.

It catalyses the reaction a 2-deoxystreptamine antibiotic + acetyl-CoA = an N(3)-acetyl-2-deoxystreptamine antibiotic + CoA + H(+). Its function is as follows. Resistance to neomycin. This Micromonospora chalcea protein is Aminoglycoside N(3)-acetyltransferase IX (aacC9).